We begin with the raw amino-acid sequence, 189 residues long: Cell division protein SepF (189 aa).

The segment at 25–70 is disordered; sequence ESRVQQQAVKPSNSRPAQQEPVRDIKQPRLVSSSSQHVTNTPSSNE. 2 stretches are compositionally biased toward polar residues: residues 27-41 and 54-70; these read RVQQ…SRPA and LVSS…SSNE.

The protein belongs to the SepF family. Homodimer. Interacts with FtsZ.

Its subcellular location is the cytoplasm. In terms of biological role, cell division protein that is part of the divisome complex and is recruited early to the Z-ring. Probably stimulates Z-ring formation, perhaps through the cross-linking of FtsZ protofilaments. Its function overlaps with FtsA. The chain is Cell division protein SepF from Streptococcus gordonii (strain Challis / ATCC 35105 / BCRC 15272 / CH1 / DL1 / V288).